We begin with the raw amino-acid sequence, 111 residues long: Cell division protein FtsB (111 aa).

The Cytoplasmic segment spans residues 1 to 3; it reads MGK. The chain crosses the membrane as a helical span at residues 4–21; that stretch reads LTLLLLILLGWLQYSLWL. Residues 22–111 are Periplasmic-facing; the sequence is GKNGIHDYVR…TNTPSNNIQR (90 aa). Positions 33–63 form a coiled coil; it reads KDDVVVQQGNNAKLKDRNEQLFAEIDDLNGG. Residues 90–111 form a disordered region; the sequence is ESNHRNANTAPSTNTPSNNIQR. The span at 95 to 111 shows a compositional bias: low complexity; sequence NANTAPSTNTPSNNIQR.

Belongs to the FtsB family. Part of a complex composed of FtsB, FtsL and FtsQ.

It is found in the cell inner membrane. In terms of biological role, essential cell division protein. May link together the upstream cell division proteins, which are predominantly cytoplasmic, with the downstream cell division proteins, which are predominantly periplasmic. In Pectobacterium carotovorum subsp. carotovorum (strain PC1), this protein is Cell division protein FtsB.